The chain runs to 989 residues: DNA-binding protein SMUBP-2 (989 aa).

An N-acetylalanine modification is found at Ala-2. Residues 213 to 220 (GPPGTGKT), Gln-402, Tyr-441, and Glu-570 each bind ATP. The SS DNA-binding stretch occupies residues 637–783 (TAFEYLDDIV…KARHITVSRK (147 aa)). Disordered regions lie at residues 650-717 (YTHE…GCDR), 765-818 (LRHD…GQPH), and 833-869 (LQRQ…TKGP). Positions 677 to 690 (EQENGQEARAAAGQ) are enriched in low complexity. Residues 721-784 (IDRTEHFRAM…ARHITVSRKS (64 aa)) enclose the R3H domain. Residues 765 to 775 (LRHDSTGEGKA) show a composition bias toward basic and acidic residues. Ser-797 and Ser-800 each carry phosphoserine. Positions 833 to 842 (LQRQQGSQAQ) are enriched in low complexity. The Nuclear localization signal motif lies at 860-864 (KKKKK). An AN1-type zinc finger spans residues 885-934 (IKADNTCSFAKCTASTTTLGQFCMHCSRRYCLSHHLPEIHGCGEKARAHA). The Zn(2+) site is built by Cys-891, Cys-896, Cys-907, Cys-910, Cys-915, His-918, His-924, and Cys-926. Residues 954-972 (ALDPAKRAQLQRRLDKKLG) are compositionally biased toward basic and acidic residues. Residues 954-989 (ALDPAKRAQLQRRLDKKLGELSSQRTSKRKEKERGT) are disordered.

It belongs to the DNA2/NAM7 helicase family. Homooligomer. Interacts with RUVBL1. Interacts with RUVBL2. Interacts with GTF3C1. Interacts with ABT1. Interacts with ribosomes. High expression in brain and testis, moderate in heart, spleen, and kidney, and low in other tissues.

The protein localises to the nucleus. The protein resides in the cytoplasm. Its subcellular location is the cell projection. It is found in the axon. The catalysed reaction is ATP + H2O = ADP + phosphate + H(+). 5' to 3' helicase that unwinds RNA and DNA duplexes in an ATP-dependent reaction. Specific to 5'-phosphorylated single-stranded guanine-rich sequences. May play a role in RNA metabolism, ribosome biogenesis or initiation of translation. May play a role in regulation of transcription. Interacts with tRNA-Tyr. In Mesocricetus auratus (Golden hamster), this protein is DNA-binding protein SMUBP-2 (IGHMBP2).